Consider the following 197-residue polypeptide: Signal peptidase complex catalytic subunit SEC11 (197 aa).

The Cytoplasmic portion of the chain corresponds to 1 to 14 (MLSSLAPYMANPRQ). A helical; Signal-anchor for type II membrane protein transmembrane segment spans residues 15-33 (TLTQVLNFALVLSTAFMLW). Over 34-197 (KGLSVVTNST…MGLMVVLQRE (164 aa)) the chain is Lumenal. Asn41 carries N-linked (GlcNAc...) asparagine glycosylation. Catalysis depends on charge relay system residues Ser53 and His92. The segment covering 102-115 (PGREDKKSVKKGGE) has biased composition (basic and acidic residues). A disordered region spans residues 102–134 (PGREDKKSVKKGGEEGEETSSTPSQKLLTKGDN). Asp139 functions as the Charge relay system in the catalytic mechanism. Residues 183 to 194 (VLLGFMGLMVVL) are C-terminal short (CTS) helix.

It belongs to the peptidase S26B family. Component of the signal peptidase complex (SPC) composed of a catalytic subunit SEC11 and three accessory subunits SPC1, SPC2 and SPC3. The complex induces a local thinning of the ER membrane which is used to measure the length of the signal peptide (SP) h-region of protein substrates. This ensures the selectivity of the complex towards h-regions shorter than 18-20 amino acids. SPC associates with the translocon complex.

The protein localises to the endoplasmic reticulum membrane. It catalyses the reaction Cleavage of hydrophobic, N-terminal signal or leader sequences from secreted and periplasmic proteins.. Catalytic component of the signal peptidase complex (SPC) which catalyzes the cleavage of N-terminal signal sequences from nascent proteins as they are translocated into the lumen of the endoplasmic reticulum. Specifically cleaves N-terminal signal peptides that contain a hydrophobic alpha-helix (h-region) shorter than 18-20 amino acids. This Paracoccidioides lutzii (strain ATCC MYA-826 / Pb01) (Paracoccidioides brasiliensis) protein is Signal peptidase complex catalytic subunit SEC11 (SEC11).